The following is a 3814-amino-acid chain: Hybrid PKS-NRPS synthetase pyvA (3814 aa).

Residues 1–340 (MDPQQRLLLE…GSNAHVILES (340 aa)) form the Ketosynthase family 3 (KS3) domain. Active-site for beta-ketoacyl synthase activity residues include C87, H222, and H261. Positions 441-758 (VFTGQGAQWH…PYFASLSRGV (318 aa)) are malonyl-CoA:ACP transacylase (MAT) domain. S533 functions as the For malonyltransferase activity in the catalytic mechanism. The segment at 835-970 (HPILGAKMPG…GLISISTATT (136 aa)) is N-terminal hotdog fold. Residues 835–1149 (HPILGAKMPG…LRLTSLSNGR (315 aa)) form a dehydratase (DH) domain region. The 317-residue stretch at 835 to 1151 (HPILGAKMPG…LTSLSNGRAA (317 aa)) folds into the PKS/mFAS DH domain. Catalysis depends on H867, which acts as the Proton acceptor; for dehydratase activity. Residues 970 to 993 (TADGAPSRKPYRQHPQPQPGRMST) form a disordered region. Positions 991-1151 (MSTASFPAQS…LTSLSNGRAA (161 aa)) are C-terminal hotdog fold. The active-site Proton donor; for dehydratase activity is the D1057. The segment at 1520 to 1836 (GLLETLVWED…MGRHTGKVVL (317 aa)) is enoyl reductase (ER) domain. The interval 1864–2036 (TYLLVGGLGG…PASSMNCGRI (173 aa)) is ketoreductase (KR) domain. One can recognise a Carrier 1 domain in the interval 2141–2220 (IDLSDRVALL…ALVEKAIGLF (80 aa)). Residue S2180 is modified to O-(pantetheine 4'-phosphoryl)serine. A compositionally biased stretch (low complexity) spans 2228–2238 (QQQQQSVQSSS). The segment at 2228–2270 (QQQQQSVQSSSAPSNDDQSPTFNKNLDSQDPSTSLQIPKADCS) is disordered. Over residues 2239-2263 (APSNDDQSPTFNKNLDSQDPSTSLQ) the composition is skewed to polar residues. Residues 2273–2718 (LPMSTFQNRL…PEVRLAGTLE (446 aa)) are condensation (C) domain 7. Residues 2738–3149 (PLNLPRRIVE…DGQLEFLGRI (412 aa)) form an adenylation (A) domain 8 region. The segment at 3257 to 3304 (SGKTDRRALGASQAPGTPPQHGAGPAAASTLDPAQAQAQDRADEEVGD) is disordered. Residues 3304–3379 (DRTMATVTRV…QLVELVHSKV (76 aa)) enclose the Carrier 2 domain. S3339 is modified (O-(pantetheine 4'-phosphoryl)serine). The interval 3428 to 3680 (MTGAESFTGI…VDLVPVNYLT (253 aa)) is thioesterase (TE) domain.

The protein in the C-terminal section; belongs to the NRP synthetase family.

Its pathway is secondary metabolite biosynthesis. In terms of biological role, hybrid PKS-NRPS synthetase; part of the gene cluster that mediates the biosynthesis of pyranoviolin A, a pyranonigrin analog with a C-3 methoxy group. Initially, the PKS portion of pyvA synthesizes C-10 carbon chain from 5 molecules of malonyl-CoA, which is then condensed with the thiolation (T) domain-bound glycine activated by the adenylation (A) domain. The subsequent chain release by Dieckmann condensation (DKC) could be catalyzed by the TE domain present at the C-terminus of pyvA and/or the alpha/beta hydrolase pyvD, installing the tetramic acid moiety. The FAD-dependent monooxygenase pyvC next epoxidizes one of the olefins of the polyketide part, and the epoxide ring-opening induces the dihydro-gamma-pyrone ring formation. The cytochrome P450 monooxygeanse pyvB would be responsible for the 2 consecutive reactions, in which the dihydro-gamma-pyrone is oxidized to gamma-pyrone and C-7 is hydroxylated to yield pyranonigrin F. Finally, the O-methyltransferase pyvH methylates the C-3 hydroxy group to complete the biosynthesis. The chain is Hybrid PKS-NRPS synthetase pyvA from Aspergillus violaceofuscus (strain CBS 115571).